A 222-amino-acid polypeptide reads, in one-letter code: MNHCLLAISAVYFKAKWLTPFEKEFTSDYPFYVSPTEMVDVSMMSMYGELFNHASVKESFGNFSIIELPYVGDTSMMVILPDKIDGLESIEQNLTDTNFKKWCNSLDAMFIDVHIPKFKVTGSYNLVDTLVKSGLTEVFGSTGDYSNMCNLDVSVDAMIHKTYIDVNEEYTEAAAATCALVSDCASTITNEFCVDHPFIYVIRHVDGKILFVGRYCSPTTNC.

The protein belongs to the serpin family. Poxviruses subfamily.

This chain is Putative serine proteinase inhibitor 2 homolog second part, found in Homo sapiens (Human).